A 283-amino-acid polypeptide reads, in one-letter code: Urease accessory protein UreD (283 aa).

Belongs to the UreD family. UreD, UreF and UreG form a complex that acts as a GTP-hydrolysis-dependent molecular chaperone, activating the urease apoprotein by helping to assemble the nickel containing metallocenter of UreC. The UreE protein probably delivers the nickel.

The protein resides in the cytoplasm. Its function is as follows. Required for maturation of urease via the functional incorporation of the urease nickel metallocenter. The chain is Urease accessory protein UreD from Acaryochloris marina (strain MBIC 11017).